The following is a 390-amino-acid chain: GTPase Obg (390 aa).

One can recognise an Obg domain in the interval 1 to 159 (MKFVDEAAIL…RDILLELLLL (159 aa)). Positions 160–333 (ADVGMLGLPN…LCWDVMKFIN (174 aa)) constitute an OBG-type G domain. GTP is bound by residues 166–173 (GLPNAGKS), 191–195 (FTTLV), 213–216 (DIPG), 283–286 (NKID), and 314–316 (SAV). 2 residues coordinate Mg(2+): Ser173 and Thr193. The segment covering 366 to 384 (AEADDDWDDDWDEEDDEGV) has biased composition (acidic residues). Residues 366–390 (AEADDDWDDDWDEEDDEGVEIIYQK) form a disordered region.

The protein belongs to the TRAFAC class OBG-HflX-like GTPase superfamily. OBG GTPase family. Monomer. The cofactor is Mg(2+).

It is found in the cytoplasm. Functionally, an essential GTPase which binds GTP, GDP and possibly (p)ppGpp with moderate affinity, with high nucleotide exchange rates and a fairly low GTP hydrolysis rate. Plays a role in control of the cell cycle, stress response, ribosome biogenesis and in those bacteria that undergo differentiation, in morphogenesis control. This chain is GTPase Obg, found in Serratia proteamaculans (strain 568).